The following is a 511-amino-acid chain: Maturase K (511 aa).

The protein belongs to the intron maturase 2 family. MatK subfamily.

The protein localises to the plastid. It is found in the chloroplast. Usually encoded in the trnK tRNA gene intron. Probably assists in splicing its own and other chloroplast group II introns. In Psathyrostachys juncea (Russian wildrye), this protein is Maturase K.